The following is a 107-amino-acid chain: Ig kappa chain V-VI region NQ5-78.2.6 (107 aa).

The tract at residues 1–23 (QILLTQSPAIMSASPGQKVTMTC) is framework-1. A disulfide bond links Cys-23 and Cys-87. Positions 24–33 (SASSSVSYMH) are complementarity-determining-1. Positions 34–48 (WYQQKSGTSPKRWIY) are framework-2. The tract at residues 49-55 (DTSKLAS) is complementarity-determining-2. The segment at 56–87 (GVPARFXGSGSATSYSLTITSMQAEDAATYYC) is framework-3. The complementarity-determining-3 stretch occupies residues 88 to 96 (QQWSSNPLT). The interval 97 to 106 (FGSGTKLEXK) is framework-4.

Its function is as follows. Anti-2-phenyl oxazolone (PHOX) Antibody. This Mus musculus (Mouse) protein is Ig kappa chain V-VI region NQ5-78.2.6.